Here is an 81-residue protein sequence, read N- to C-terminus: Sulfur carrier protein TusA (81 aa).

The active-site Cysteine persulfide intermediate is the cysteine 19.

Belongs to the sulfur carrier protein TusA family. As to quaternary structure, interacts with IscS.

It localises to the cytoplasm. It participates in tRNA modification. Its function is as follows. Sulfur carrier protein involved in sulfur trafficking in the cell. Part of a sulfur-relay system required for 2-thiolation during synthesis of 2-thiouridine of the modified wobble base 5-methylaminomethyl-2-thiouridine (mnm(5)s(2)U) in tRNA. Interacts with IscS and stimulates its cysteine desulfurase activity. Accepts an activated sulfur from IscS, which is then transferred to TusD, and thus determines the direction of sulfur flow from IscS to 2-thiouridine formation. Also appears to be involved in sulfur transfer for the biosynthesis of molybdopterin. This chain is Sulfur carrier protein TusA, found in Citrobacter koseri (strain ATCC BAA-895 / CDC 4225-83 / SGSC4696).